A 165-amino-acid polypeptide reads, in one-letter code: Nucleotide-binding protein LBF_1338 (165 aa).

It belongs to the YajQ family.

Its function is as follows. Nucleotide-binding protein. The chain is Nucleotide-binding protein LBF_1338 from Leptospira biflexa serovar Patoc (strain Patoc 1 / Ames).